Here is a 64-residue protein sequence, read N- to C-terminus: DNA-binding protein 7b (64 aa).

This sequence belongs to the 7 kDa DNA-binding/endoribonuclease P2 family. As to quaternary structure, monomer.

The protein resides in the cytoplasm. Its function is as follows. Can constrain negative DNA supercoils. May be involved in maintaining the integrity of the genome at high temperature. This Saccharolobus islandicus (strain HVE10/4) (Sulfolobus islandicus) protein is DNA-binding protein 7b.